A 188-amino-acid polypeptide reads, in one-letter code: Peptidyl-tRNA hydrolase (188 aa).

Tyr15 contributes to the tRNA binding site. His20 acts as the Proton acceptor in catalysis. Tyr64, Asn66, and Asn112 together coordinate tRNA.

The protein belongs to the PTH family. As to quaternary structure, monomer.

Its subcellular location is the cytoplasm. It catalyses the reaction an N-acyl-L-alpha-aminoacyl-tRNA + H2O = an N-acyl-L-amino acid + a tRNA + H(+). In terms of biological role, hydrolyzes ribosome-free peptidyl-tRNAs (with 1 or more amino acids incorporated), which drop off the ribosome during protein synthesis, or as a result of ribosome stalling. Catalyzes the release of premature peptidyl moieties from peptidyl-tRNA molecules trapped in stalled 50S ribosomal subunits, and thus maintains levels of free tRNAs and 50S ribosomes. This chain is Peptidyl-tRNA hydrolase, found in Cytophaga hutchinsonii (strain ATCC 33406 / DSM 1761 / CIP 103989 / NBRC 15051 / NCIMB 9469 / D465).